A 245-amino-acid chain; its full sequence is 4-hydroxy-tetrahydrodipicolinate reductase (245 aa).

Residues 7-12 (GAKGKV), 75-77 (GTT), and 102-105 (APNF) contribute to the NAD(+) site. His132 (proton donor/acceptor) is an active-site residue. His133 is a (S)-2,3,4,5-tetrahydrodipicolinate binding site. The active-site Proton donor is Lys136. 142–143 (GT) provides a ligand contact to (S)-2,3,4,5-tetrahydrodipicolinate.

Belongs to the DapB family.

Its subcellular location is the cytoplasm. The catalysed reaction is (S)-2,3,4,5-tetrahydrodipicolinate + NAD(+) + H2O = (2S,4S)-4-hydroxy-2,3,4,5-tetrahydrodipicolinate + NADH + H(+). It carries out the reaction (S)-2,3,4,5-tetrahydrodipicolinate + NADP(+) + H2O = (2S,4S)-4-hydroxy-2,3,4,5-tetrahydrodipicolinate + NADPH + H(+). It participates in amino-acid biosynthesis; L-lysine biosynthesis via DAP pathway; (S)-tetrahydrodipicolinate from L-aspartate: step 4/4. Functionally, catalyzes the conversion of 4-hydroxy-tetrahydrodipicolinate (HTPA) to tetrahydrodipicolinate. The sequence is that of 4-hydroxy-tetrahydrodipicolinate reductase from Mycobacterium sp. (strain JLS).